Reading from the N-terminus, the 335-residue chain is Mesoderm-specific transcript homolog protein (335 aa).

A run of 2 helical transmembrane segments spans residues 13–33 (WWVQ…HIPP) and 63–83 (VGVV…TSSY). Residues 71-310 (IVVLLHGFPT…PRSTVSILDD (240 aa)) form the AB hydrolase-1 domain. The short motif at 98-103 (RVIALD) is the RVIALD element. N-linked (GlcNAc...) asparagine glycosylation is present at N163. A helical membrane pass occupies residues 266–286 (VGALASVTIPIHFIYGPLDPV).

Belongs to the AB hydrolase superfamily. As to expression, highly expressed in hydatidiform moles, but barely expressed in dermoid cysts. Biallelic expression is detected in blood lymphocytes. Seems to imprinted in an isoform-specific manner rather than in a tissue-specific manner in lymphocytes. Isoform 1 is expressed only from the paternal allele. Isoform 2 is expressed from both the paternal allele and the maternal allele.

The protein localises to the endoplasmic reticulum membrane. In Homo sapiens (Human), this protein is Mesoderm-specific transcript homolog protein (MEST).